Consider the following 70-residue polypeptide: Putative venom toxin Ts29 (70 aa).

A signal peptide spans 1–20 (MSPLFVVLLIATTTFYHSDA).

In terms of tissue distribution, expressed by the venom gland.

It localises to the secreted. The protein is Putative venom toxin Ts29 of Tityus serrulatus (Brazilian scorpion).